Reading from the N-terminus, the 215-residue chain is Small ribosomal subunit protein uS7 (215 aa).

Belongs to the universal ribosomal protein uS7 family. As to quaternary structure, part of the 30S ribosomal subunit.

In terms of biological role, one of the primary rRNA binding proteins, it binds directly to 16S rRNA where it nucleates assembly of the head domain of the 30S subunit. Is located at the subunit interface close to the decoding center. In Thermococcus kodakarensis (strain ATCC BAA-918 / JCM 12380 / KOD1) (Pyrococcus kodakaraensis (strain KOD1)), this protein is Small ribosomal subunit protein uS7.